Consider the following 261-residue polypeptide: ClpXP adapter protein SpxH (261 aa).

Belongs to the SpxH family. Interacts with Spx.

The protein resides in the cytoplasm. In terms of biological role, adapter protein required for efficient degradation of Spx by ClpXP under non-stress conditions. Interaction with Spx stabilizes Spx and exposes the C-terminus of Spx for recognition and proteolysis by ClpXP. This is ClpXP adapter protein SpxH from Staphylococcus aureus.